Consider the following 96-residue polypeptide: Nucleoid-associated protein CCA_00330 (96 aa).

The protein belongs to the YbaB/EbfC family. Homodimer.

Its subcellular location is the cytoplasm. It localises to the nucleoid. In terms of biological role, binds to DNA and alters its conformation. May be involved in regulation of gene expression, nucleoid organization and DNA protection. The polypeptide is Nucleoid-associated protein CCA_00330 (Chlamydia caviae (strain ATCC VR-813 / DSM 19441 / 03DC25 / GPIC) (Chlamydophila caviae)).